The following is a 1450-amino-acid chain: DNA-directed RNA polymerase RPB1 homolog (1450 aa).

It belongs to the RNA polymerase beta' chain family. Part of the viral DNA-directed RNA polymerase that consists of 8 polII-like subunits (RPB1, RPB2, RPB3, RPB5, RPB6, RPB7, RPB9, RPB10), a capping enzyme and a termination factor.

It localises to the virion. The enzyme catalyses RNA(n) + a ribonucleoside 5'-triphosphate = RNA(n+1) + diphosphate. In terms of biological role, catalytic component of the DNA-directed RNA polymerase (RNAP) that catalyzes the transcription in the cytoplasm of viral DNA into RNA using the four ribonucleoside triphosphates as substrates. Forms the polymerase active center together with RPB2. Part of the core element with the central large cleft, the clamp element that moves to open and close the cleft and the jaws that are thought to grab the incoming DNA template. This chain is DNA-directed RNA polymerase RPB1 homolog, found in African swine fever virus (isolate Pig/Kenya/KEN-50/1950) (ASFV).